We begin with the raw amino-acid sequence, 516 residues long: 2,3-bisphosphoglycerate-independent phosphoglycerate mutase (516 aa).

Residues D13 and S63 each coordinate Mn(2+). S63 acts as the Phosphoserine intermediate in catalysis. Substrate contacts are provided by residues H124, 154–155 (RD), R186, R192, 262–265 (RPDR), and K337. 5 residues coordinate Mn(2+): D404, H408, D445, H446, and H464.

Belongs to the BPG-independent phosphoglycerate mutase family. As to quaternary structure, monomer. The cofactor is Mn(2+).

The enzyme catalyses (2R)-2-phosphoglycerate = (2R)-3-phosphoglycerate. The protein operates within carbohydrate degradation; glycolysis; pyruvate from D-glyceraldehyde 3-phosphate: step 3/5. Its function is as follows. Catalyzes the interconversion of 2-phosphoglycerate and 3-phosphoglycerate. The polypeptide is 2,3-bisphosphoglycerate-independent phosphoglycerate mutase (Cellvibrio japonicus (strain Ueda107) (Pseudomonas fluorescens subsp. cellulosa)).